The primary structure comprises 314 residues: L-lactate dehydrogenase 1 (314 aa).

Residues Val16, Asp37, Lys42, Tyr68, and 82–83 (GL) each bind NAD(+). Substrate-binding positions include Gln85, Arg91, and 123–126 (NPVD). NAD(+) is bound by residues 121-123 (ATN) and Ser146. 151 to 154 (DSAR) is a substrate binding site. Beta-D-fructose 1,6-bisphosphate contacts are provided by Arg156 and His171. The active-site Proton acceptor is His178. Phosphotyrosine is present on Tyr223. Substrate is bound at residue Thr232.

Belongs to the LDH/MDH superfamily. LDH family. In terms of assembly, homotetramer.

Its subcellular location is the cytoplasm. It catalyses the reaction (S)-lactate + NAD(+) = pyruvate + NADH + H(+). It functions in the pathway fermentation; pyruvate fermentation to lactate; (S)-lactate from pyruvate: step 1/1. With respect to regulation, allosterically activated by fructose 1,6-bisphosphate (FBP). Its function is as follows. Catalyzes the conversion of lactate to pyruvate. This is L-lactate dehydrogenase 1 from Bacillus cereus (strain ATCC 14579 / DSM 31 / CCUG 7414 / JCM 2152 / NBRC 15305 / NCIMB 9373 / NCTC 2599 / NRRL B-3711).